The following is a 777-amino-acid chain: Lon protease (777 aa).

The 194-residue stretch at isoleucine 11 to isoleucine 204 folds into the Lon N-terminal domain. Glycine 356–threonine 363 is a binding site for ATP. Residues threonine 592–lysine 773 form the Lon proteolytic domain. Catalysis depends on residues serine 679 and lysine 722.

Belongs to the peptidase S16 family. As to quaternary structure, homohexamer. Organized in a ring with a central cavity.

The protein resides in the cytoplasm. The catalysed reaction is Hydrolysis of proteins in presence of ATP.. Functionally, ATP-dependent serine protease that mediates the selective degradation of mutant and abnormal proteins as well as certain short-lived regulatory proteins. Required for cellular homeostasis and for survival from DNA damage and developmental changes induced by stress. Degrades polypeptides processively to yield small peptide fragments that are 5 to 10 amino acids long. Binds to DNA in a double-stranded, site-specific manner. The polypeptide is Lon protease (Buchnera aphidicola subsp. Acyrthosiphon pisum (strain APS) (Acyrthosiphon pisum symbiotic bacterium)).